Consider the following 132-residue polypeptide: Small ribosomal subunit protein uS8 (132 aa).

It belongs to the universal ribosomal protein uS8 family. In terms of assembly, part of the 30S ribosomal subunit. Contacts proteins S5 and S12.

Functionally, one of the primary rRNA binding proteins, it binds directly to 16S rRNA central domain where it helps coordinate assembly of the platform of the 30S subunit. This Borreliella afzelii (strain PKo) (Borrelia afzelii) protein is Small ribosomal subunit protein uS8.